The following is a 297-amino-acid chain: Transcription factor PCF8 (297 aa).

Positions 1 to 22 (MEEVVGGGKERKRPRGALVGVG) are disordered. The TCP domain occupies 46 to 104 (GKDRHSKVVTSRGLRDRRVRLSVPTAIAFYDIQDRLGVDQPSKAIEWLIRAAAAAIDAL). 2 disordered regions span residues 116-136 (AASS…SETS) and 273-297 (AAPA…ERKT). Residues 282-297 (GERRLQLWDFKEERKT) are compositionally biased toward basic and acidic residues.

Forms homodimers and heterodimers.

It localises to the nucleus. Its function is as follows. Transcription activator. Binds the promoter core sequence 5'-GGNCC-3'. This Oryza sativa subsp. indica (Rice) protein is Transcription factor PCF8 (PCF8).